Reading from the N-terminus, the 876-residue chain is Monofunctional isopimaradiene synthase, chloroplastic (876 aa).

The N-terminal 64 residues, 1–64, are a transit peptide targeting the chloroplast; it reads MAMPSYSSLS…YLRLGSRKII (64 aa). Residues Asp628, Asp632, Asn772, Thr776, and Glu780 each coordinate Mg(2+). The DDXXD motif signature appears at 628 to 632; sequence DDLYD.

It belongs to the terpene synthase family. Tpsd subfamily. The cofactor is Mg(2+).

It localises to the plastid. The protein localises to the chloroplast. It catalyses the reaction (+)-copalyl diphosphate = isopimara-7,15-diene + diphosphate. The protein operates within terpene metabolism; oleoresin biosynthesis. In terms of biological role, involved in defensive oleoresin formation in conifers in response to insect attack or other injury. Involved in diterpene (C20) olefins biosynthesis. Monofunctional enzyme lacking the DXDD motif in the class II active site relevant for the cyclization of geranylgeranyl diphosphate (GGPP). Requires (+)-copalyl diphosphate ((+)-CPP) as substrate, but no activity with GGPP or ent-CPP. Isopimaradiene is the major products of the enzyme followed by sandaracopimaradiene. This Pinus banksiana (Jack pine) protein is Monofunctional isopimaradiene synthase, chloroplastic.